The following is a 581-amino-acid chain: Arginine--tRNA ligase (581 aa).

A 'HIGH' region motif is present at residues 126–136; the sequence is PNLAKEMHVGH.

It belongs to the class-I aminoacyl-tRNA synthetase family. As to quaternary structure, monomer.

Its subcellular location is the cytoplasm. The enzyme catalyses tRNA(Arg) + L-arginine + ATP = L-arginyl-tRNA(Arg) + AMP + diphosphate. This chain is Arginine--tRNA ligase, found in Shewanella sp. (strain MR-4).